A 306-amino-acid chain; its full sequence is Dermonecrotic toxin LiSicTox-alphaIA1bi (306 aa).

Residues Met-1–Ala-18 form the signal peptide. The propeptide occupies Ala-19 to Arg-26. His-38 is a catalytic residue. 2 residues coordinate Mg(2+): Glu-58 and Asp-60. The active-site Nucleophile is the His-74. 2 disulfide bridges follow: Cys-78–Cys-84 and Cys-80–Cys-223. A Mg(2+)-binding site is contributed by Asp-118.

The protein belongs to the arthropod phospholipase D family. Class II subfamily. Class IIa sub-subfamily. Requires Mg(2+) as cofactor. Expressed by the venom gland.

The protein resides in the secreted. The catalysed reaction is an N-(acyl)-sphingosylphosphocholine = an N-(acyl)-sphingosyl-1,3-cyclic phosphate + choline. The enzyme catalyses an N-(acyl)-sphingosylphosphoethanolamine = an N-(acyl)-sphingosyl-1,3-cyclic phosphate + ethanolamine. It catalyses the reaction a 1-acyl-sn-glycero-3-phosphocholine = a 1-acyl-sn-glycero-2,3-cyclic phosphate + choline. It carries out the reaction a 1-acyl-sn-glycero-3-phosphoethanolamine = a 1-acyl-sn-glycero-2,3-cyclic phosphate + ethanolamine. In terms of biological role, dermonecrotic toxins cleave the phosphodiester linkage between the phosphate and headgroup of certain phospholipids (sphingolipid and lysolipid substrates), forming an alcohol (often choline) and a cyclic phosphate. This toxin acts on sphingomyelin (SM). The level of enzymatic activity is high according to Tambourgi and colleagues or low according to Felicori and colleagues. It may also act on ceramide phosphoethanolamine (CPE), lysophosphatidylcholine (LPC) and lysophosphatidylethanolamine (LPE), but not on lysophosphatidylserine (LPS), and lysophosphatidylglycerol (LPG). It acts by transphosphatidylation, releasing exclusively cyclic phosphate products as second products. It induces complement-dependent hemolysis, dermonecrosis, vascular permeability and platelet aggregation. Both C5a and the membrane attack complex may play a role in the induction of dermonecrosis. MMP-9 and MMP-2 produced by skin fibroblasts can also contribute to proteolytic tissue destruction. The polypeptide is Dermonecrotic toxin LiSicTox-alphaIA1bi (Loxosceles intermedia (Brown spider)).